Reading from the N-terminus, the 337-residue chain is MQITVLGAGAWGTAVAAQAALRHPTLLWGRDPAQMAEIAATRRNQRYLPDADLPARLVCSGDWDAALAHVSARAGTDADANGAGLVIVATPMAALREMLARIPQGLPTLWLCKGFEAGTGLLGHEIAREVAPQLACGVLSGPSFALEVARQQPTALVAASQHESVRDAAVRALHGASLRVYASDDPVGVEVGGAVKNVLAIATGIADGMGLGLNARAALITRGLAEMTRLGLALGARAETFMGLSGLGDLVLTATGDLSRNRRVGLRLADGQTLAQILAELGHVSEGVYSAGTVLERAGRLGVDMPITAAVVAVLQGGLAPRDAVAALMQREARAES.

NADPH contacts are provided by Trp-11, Arg-30, and Lys-113. Sn-glycerol 3-phosphate-binding residues include Lys-113, Gly-141, and Ser-143. Residue Ala-145 coordinates NADPH. Sn-glycerol 3-phosphate-binding residues include Lys-196, Asp-249, Ser-259, Arg-260, and Asn-261. Lys-196 acts as the Proton acceptor in catalysis. Arg-260 serves as a coordination point for NADPH. Val-284 and Glu-286 together coordinate NADPH.

The protein belongs to the NAD-dependent glycerol-3-phosphate dehydrogenase family.

The protein resides in the cytoplasm. It carries out the reaction sn-glycerol 3-phosphate + NAD(+) = dihydroxyacetone phosphate + NADH + H(+). The catalysed reaction is sn-glycerol 3-phosphate + NADP(+) = dihydroxyacetone phosphate + NADPH + H(+). It functions in the pathway membrane lipid metabolism; glycerophospholipid metabolism. Its function is as follows. Catalyzes the reduction of the glycolytic intermediate dihydroxyacetone phosphate (DHAP) to sn-glycerol 3-phosphate (G3P), the key precursor for phospholipid synthesis. This chain is Glycerol-3-phosphate dehydrogenase [NAD(P)+], found in Leptothrix cholodnii (strain ATCC 51168 / LMG 8142 / SP-6) (Leptothrix discophora (strain SP-6)).